Reading from the N-terminus, the 358-residue chain is Putative myc-like protein MYCLP1 (358 aa).

Disordered regions lie at residues 150 to 171 and 219 to 245; these read ACSRSESPSDSEGEEIDVTVKK and QEGAPKRMPPKEALEREAPGGKDDKED. Residues 227–242 show a composition bias toward basic and acidic residues; the sequence is PPKEALEREAPGGKDD. Residues 274–326 form the bHLH domain; it reads WTKKKYHSYLERKRRNDQRSRFLALRDEVPALASCSRVSKVMILVKATEYLHE.

Efficient DNA binding requires dimerization with another bHLH protein. Binds DNA as a heterodimer with MAX. In terms of tissue distribution, detected in adult testis.

It is found in the nucleus. This is Putative myc-like protein MYCLP1 (MYCLP1) from Homo sapiens (Human).